The chain runs to 145 residues: Protein BUD31 homolog 1 (145 aa).

This sequence belongs to the BUD31 (G10) family.

The protein localises to the nucleus. This is Protein BUD31 homolog 1 from Oryza sativa subsp. japonica (Rice).